The sequence spans 582 residues: ATP-dependent lipid A-core flippase (582 aa).

The next 6 membrane-spanning stretches (helical) occupy residues 23 to 43 (AAFI…TLFL), 61 to 81 (ILLY…SLNV), 140 to 160 (AVLV…LMFY), 163 to 183 (WQLS…VGVV), 247 to 267 (AIST…VLVI), and 273 to 293 (MLGE…IMLL). One can recognise an ABC transmembrane type-1 domain in the interval 26–308 (IAAILCMIGY…LTNVNSDFQR (283 aa)). Residues 340 to 576 (IVFDDVTFSY…EGAYFQLHNL (237 aa)) enclose the ABC transporter domain. 374 to 381 (GRSGSGKS) is an ATP binding site.

It belongs to the ABC transporter superfamily. Lipid exporter (TC 3.A.1.106) family. As to quaternary structure, homodimer.

The protein localises to the cell inner membrane. The catalysed reaction is ATP + H2O + lipid A-core oligosaccharideSide 1 = ADP + phosphate + lipid A-core oligosaccharideSide 2.. Functionally, involved in lipopolysaccharide (LPS) biosynthesis. Translocates lipid A-core from the inner to the outer leaflet of the inner membrane. Transmembrane domains (TMD) form a pore in the inner membrane and the ATP-binding domain (NBD) is responsible for energy generation. The polypeptide is ATP-dependent lipid A-core flippase (Idiomarina loihiensis (strain ATCC BAA-735 / DSM 15497 / L2-TR)).